The primary structure comprises 262 residues: Zinc import ATP-binding protein ZnuC (262 aa).

The ABC transporter domain maps to 4–220 (LNLSGVRLSH…PEYLALFGPR (217 aa)). 36–43 (GPNGAGKS) contacts ATP. The interval 238–262 (ADGSVLPLAEGGGEPHTHGPGCRHG) is disordered.

This sequence belongs to the ABC transporter superfamily. Zinc importer (TC 3.A.1.15.5) family. As to quaternary structure, the complex is composed of two ATP-binding proteins (ZnuC), two transmembrane proteins (ZnuB) and a solute-binding protein (ZnuA).

The protein localises to the cell inner membrane. The enzyme catalyses Zn(2+)(out) + ATP(in) + H2O(in) = Zn(2+)(in) + ADP(in) + phosphate(in) + H(+)(in). Its function is as follows. Part of the ABC transporter complex ZnuABC involved in zinc import. Responsible for energy coupling to the transport system. The protein is Zinc import ATP-binding protein ZnuC of Paramagnetospirillum magneticum (strain ATCC 700264 / AMB-1) (Magnetospirillum magneticum).